Reading from the N-terminus, the 533-residue chain is DNA-directed RNA polymerase III subunit RPC3 (533 aa).

Residue serine 194 is modified to Phosphoserine. The segment at 197-230 (GKGKRRRSSDEDATGEPKAKRPKQTTDNKEPIPD) is disordered. Residues 211-228 (GEPKAKRPKQTTDNKEPI) show a composition bias toward basic and acidic residues.

The protein belongs to the eukaryotic RPC3/POLR3C RNA polymerase subunit family. Component of the RNA polymerase III complex consisting of 17 subunits: a ten-subunit horseshoe-shaped catalytic core composed of POLR3A/RPC1, POLR3B/RPC2, POLR1C/RPAC1, POLR1D/RPAC2, POLR3K/RPC10, POLR2E/RPABC1, POLR2F/RPABC2, POLR2H/RPABC3, POLR2K/RPABC4 and POLR2L/RPABC5; a mobile stalk composed of two subunits POLR3H/RPC8 and CRCP/RPC9, protruding from the core and functioning primarily in transcription initiation; and additional subunits homologous to general transcription factors of the RNA polymerase II machinery, POLR3C/RPC3-POLR3F/RPC6-POLR3G/RPC7 heterotrimer required for transcription initiation and POLR3D/RPC4-POLR3E/RPC5 heterodimer involved in both transcription initiation and termination. Directly interacts with POLR3G/RPC7 and POLR3GL. Directly interacts with POLR3F/RPC6. Interacts with GTF3C4. As part of the RNA polymerase III complex, interacts with PKP2.

It is found in the nucleus. Functionally, DNA-dependent RNA polymerase catalyzes the transcription of DNA into RNA using the four ribonucleoside triphosphates as substrates. Specific peripheric component of RNA polymerase III (Pol III) which synthesizes small non-coding RNAs including 5S rRNA, snRNAs, tRNAs and miRNAs from at least 500 distinct genomic loci. Part of POLR3C/RPC3-POLR3F/RPC6-POLR3G/RPC7 heterotrimer, coordinates the dynamics of Pol III stalk and clamp modules during the transition from apo to elongation state. Pol III plays a key role in sensing and limiting infection by intracellular bacteria and DNA viruses. Acts as a nuclear and cytosolic DNA sensor involved in innate immune response. Can sense non-self dsDNA that serves as template for transcription into dsRNA. The non-self RNA polymerase III transcripts, such as Epstein-Barr virus-encoded RNAs (EBERs) induce type I interferon and NF-kappa-B through the RIG-I pathway. Preferentially binds single-stranded DNA (ssDNA) in a sequence-independent manner. This Bos taurus (Bovine) protein is DNA-directed RNA polymerase III subunit RPC3 (POLR3C).